The sequence spans 258 residues: UPF0246 protein VP0504 (258 aa).

It belongs to the UPF0246 family.

This is UPF0246 protein VP0504 from Vibrio parahaemolyticus serotype O3:K6 (strain RIMD 2210633).